We begin with the raw amino-acid sequence, 385 residues long: Palmitoyl-[acyl-carrier-protein] 4-desaturase, chloroplastic (385 aa).

The transit peptide at 1 to 36 (MAMKLNALMTLQCPKRNMFTRIAPPQAGRVRSKVSM) directs the protein to the chloroplast. Fe cation is bound by residues Glu126, Glu164, His167, Glu217, Glu250, and His253.

This sequence belongs to the fatty acid desaturase type 2 family. As to quaternary structure, homodimer. Fe(2+) is required as a cofactor. As to expression, found only in tissues which synthesize petroselinic acid, such as developing seeds.

The protein localises to the plastid. It localises to the chloroplast. The enzyme catalyses hexadecanoyl-[ACP] + 2 reduced [2Fe-2S]-[ferredoxin] + O2 + 2 H(+) = (4Z)-hexadecenoyl-[ACP] + 2 oxidized [2Fe-2S]-[ferredoxin] + 2 H2O. Functionally, converts palmitoyl-ACP to (4Z)-hexadec-4-enoyl-ACP by introduction of a cis double bond between carbons 4 and 5 of the acyl chain. In Coriandrum sativum (Coriander), this protein is Palmitoyl-[acyl-carrier-protein] 4-desaturase, chloroplastic.